The sequence spans 901 residues: Dipeptidyl-aminopeptidase B (901 aa).

Residues 1-22 (MSSPRPSTSSTSSDSGLSVDTT) show a composition bias toward low complexity. Residues 1-67 (MSSPRPSTSS…EPFLPSAKKQ (67 aa)) are disordered. At 1–76 (MSSPRPSTSS…QAASGSRTSR (76 aa)) the chain is on the cytoplasmic side. The chain crosses the membrane as a helical; Signal-anchor for type II membrane protein span at residues 77 to 97 (LIWGLVILCVAGWLWGLVLFV). At 98–901 (TQNRSAQQSV…VKRSLPMLVN (804 aa)) the chain is on the vacuolar side. 2 N-linked (GlcNAc...) asparagine glycosylation sites follow: asparagine 334 and asparagine 625. Serine 739 acts as the Charge relay system in catalysis. Asparagine 793 carries N-linked (GlcNAc...) asparagine glycosylation. Catalysis depends on charge relay system residues aspartate 816 and histidine 849.

Belongs to the peptidase S9B family.

It localises to the vacuole membrane. It catalyses the reaction Release of an N-terminal dipeptide, Xaa-Yaa-|-Zaa-, from a polypeptide, preferentially when Yaa is Pro, provided Zaa is neither Pro nor hydroxyproline.. Its function is as follows. Type IV dipeptidyl-peptidase which removes N-terminal dipeptides sequentially from polypeptides having unsubstituted N-termini provided that the penultimate residue is proline. The polypeptide is Dipeptidyl-aminopeptidase B (dapB) (Aspergillus niger).